The primary structure comprises 257 residues: Type III pantothenate kinase (257 aa).

6–13 contacts ATP; sequence DCGNTNTV. Residue 107 to 110 coordinates substrate; it reads GPDR. Asp-109 serves as the catalytic Proton acceptor. Asp-129 is a binding site for K(+). Thr-132 contacts ATP. Thr-184 contacts substrate.

This sequence belongs to the type III pantothenate kinase family. As to quaternary structure, homodimer. NH4(+) serves as cofactor. The cofactor is K(+).

It is found in the cytoplasm. The enzyme catalyses (R)-pantothenate + ATP = (R)-4'-phosphopantothenate + ADP + H(+). It functions in the pathway cofactor biosynthesis; coenzyme A biosynthesis; CoA from (R)-pantothenate: step 1/5. Its function is as follows. Catalyzes the phosphorylation of pantothenate (Pan), the first step in CoA biosynthesis. The sequence is that of Type III pantothenate kinase from Cereibacter sphaeroides (strain ATCC 17025 / ATH 2.4.3) (Rhodobacter sphaeroides).